We begin with the raw amino-acid sequence, 473 residues long: Cysteine--tRNA ligase (473 aa).

Cys-30 contacts Zn(2+). The 'HIGH' region motif lies at 32–42 (MTVYDYCHIGH). Zn(2+)-binding residues include Cys-213, His-238, and Glu-242. A 'KMSKS' region motif is present at residues 270–274 (KMSKS). Residue Lys-273 participates in ATP binding.

It belongs to the class-I aminoacyl-tRNA synthetase family. As to quaternary structure, monomer. Zn(2+) serves as cofactor.

The protein localises to the cytoplasm. The enzyme catalyses tRNA(Cys) + L-cysteine + ATP = L-cysteinyl-tRNA(Cys) + AMP + diphosphate. In Acinetobacter baumannii (strain ACICU), this protein is Cysteine--tRNA ligase.